The chain runs to 423 residues: Mitogen-activated protein kinase 9 (423 aa).

The Protein kinase domain maps to 26 to 321; that stretch reads YQQLKPIGSG…VDEALRHPYI (296 aa). Residues 32-40 and Lys55 contribute to the ATP site; that span reads IGSGAQGIV. The active-site Proton acceptor is Asp151. Residue Thr183 is modified to Phosphothreonine; by MAP2K7. The TXY motif lies at 183–185; it reads TPY. Residue Tyr185 is modified to Phosphotyrosine; by MAP2K4. Residues 366–375 show a composition bias toward basic and acidic residues; that stretch reads RSKNGVKDQP. The disordered stretch occupies residues 366 to 423; sequence RSKNGVKDQPSDAAVSSKATPSQSSSINDISSMSTEHTLASDTDSSLDASTGPLEGCR. Positions 387–416 are enriched in low complexity; the sequence is SQSSSINDISSMSTEHTLASDTDSSLDAST.

This sequence belongs to the protein kinase superfamily. CMGC Ser/Thr protein kinase family. MAP kinase subfamily. Interacts with MECOM. Binds to at least four scaffolding proteins, MAPK8IP1/JIP-1, MAPK8IP2/JIP-2, MAPK8IP3/JIP-3/JSAP1 and SPAG9/MAPK8IP4/JIP-4. These proteins also bind other components of the JNK signaling pathway. Interacts with NFATC4. Interacts with ATF7; the interaction does not phosphorylate ATF7 but acts as a docking site for ATF7-associated partners such as JUN. Interacts with BCL10. Interacts with CTNNB1 and GSK3B. Interacts with DCLK2. Interacts with MAPKBP1. Interacts with POU5F1; phosphorylates POU5F1 at 'Ser-347'. Found in a complex with SH3RF1, RAC2, MAP3K7/TAK1, MAP2K7/MKK7, MAPK8IP1/JIP1 and MAPK8/JNK1. It depends on Mg(2+) as a cofactor. Post-translationally, dually phosphorylated on Thr-183 and Tyr-185 by MAP2K7 and MAP2K4, which activates the enzyme. Autophosphorylated in vitro.

It is found in the cytoplasm. The protein resides in the nucleus. It carries out the reaction L-seryl-[protein] + ATP = O-phospho-L-seryl-[protein] + ADP + H(+). It catalyses the reaction L-threonyl-[protein] + ATP = O-phospho-L-threonyl-[protein] + ADP + H(+). Activated by threonine and tyrosine phosphorylation by either of two dual specificity kinases, MAP2K4 and MAP2K7. MAP2K4 shows a strong preference for Tyr-185 while MAP2K7 phosphorylates Tyr-183 preferentially. Inhibited by dual specificity phosphatases, such as DUSP1. Its function is as follows. Serine/threonine-protein kinase involved in various processes such as cell proliferation, differentiation, migration, transformation and programmed cell death. Extracellular stimuli such as pro-inflammatory cytokines or physical stress stimulate the stress-activated protein kinase/c-Jun N-terminal kinase (SAP/JNK) signaling pathway. In this cascade, two dual specificity kinases MAP2K4/MKK4 and MAP2K7/MKK7 phosphorylate and activate MAPK9/JNK2. In turn, MAPK9/JNK2 phosphorylates a number of transcription factors, primarily components of AP-1 such as JUN and ATF2 and thus regulates AP-1 transcriptional activity. In response to oxidative or ribotoxic stresses, inhibits rRNA synthesis by phosphorylating and inactivating the RNA polymerase 1-specific transcription initiation factor RRN3. Promotes stressed cell apoptosis by phosphorylating key regulatory factors including TP53 and YAP1. In T-cells, MAPK8 and MAPK9 are required for polarized differentiation of T-helper cells into Th1 cells. Upon T-cell receptor (TCR) stimulation, is activated by CARMA1, BCL10, MAP2K7 and MAP3K7/TAK1 to regulate JUN protein levels. Plays an important role in the osmotic stress-induced epithelial tight-junctions disruption. When activated, promotes beta-catenin/CTNNB1 degradation and inhibits the canonical Wnt signaling pathway. Also participates in neurite growth in spiral ganglion neurons. Phosphorylates the CLOCK-BMAL1 heterodimer and plays a role in the regulation of the circadian clock. Phosphorylates POU5F1, which results in the inhibition of POU5F1's transcriptional activity and enhances its proteasomal degradation. Phosphorylates ALKBH5 in response to reactive oxygen species (ROS), promoting ALKBH5 sumoylation and inactivation. In Rattus norvegicus (Rat), this protein is Mitogen-activated protein kinase 9 (Mapk9).